The sequence spans 594 residues: MSPAEAAPRKKHVRFARMEGDVDHDDQEENTLFDKQKDVKEGLKSVLKGGKGILSQGSGQVDVVRPGRSKTGTCWRWLVSLALCASFLGLGMAISVLGPTFEDLAINVNKNISNLSYIFVGRASGYIGGSLLGGILFDFVNPHLLLGFALLTTAFGMSGTPFCKKAWVLTVLMSSVGVSMGVLDTGGNVLILNTWGEQAGPHMQALHFSFAAGAFASPIIAKLLFGHHNSSTNTSLMSGHASKTIDAVLPFSHPKGTSTIDLPWMWAYIVIGAFVLLVSLLFFSLYFCISTNSNRTKTASGKQQFSKHHNTLIILLSMFFFFYVGSEVAYGSFIFTYGKDYVHMEETEAAGLNSLFWGAFAAGRGLAIFFAACLHPGTLILLSLVGTTVSSLLLCLFSQNYPMLWACTALYGISMSTTFPSGISWVEQYTTVTGRSAAIFVVGAALGEMVLPALLGFLLGHVQNYPLLMYLTLCTATFTSILFPVLYKLASPEGNVTLRKSSGKCTIKDADDSEYRQALLENMEEQEENESEADLCNDADFEVIEMDDASLLSSPKSSPPADVAASVPDVHLVASPLSEPNMLSFSTDSPRSKL.

Transmembrane regions (helical) follow at residues 77-97, 115-137, 144-161, 166-186, 205-225, 269-289, 311-331, 349-371, 393-413, 439-459, and 467-487; these read WLVS…ISVL, LSYI…GILF, LLLG…SGTP, AWVL…LDTG, ALHF…KLLF, IVIG…YFCI, TLII…VAYG, AAGL…IFFA, LLCL…LYGI, IFVV…GFLL, and LLMY…PVLY.

This sequence belongs to the major facilitator superfamily.

It localises to the apical cell membrane. In terms of biological role, may function as a sodium-dependent glucose transporter. Potential channels for urea in the inner medulla of kidney. This Danio rerio (Zebrafish) protein is Sodium-dependent glucose transporter 1 (mfsd4b).